The primary structure comprises 307 residues: uncharacterized protein (307 aa).

This is an uncharacterized protein from Archaeoglobus fulgidus (strain ATCC 49558 / DSM 4304 / JCM 9628 / NBRC 100126 / VC-16).